The chain runs to 360 residues: S-adenosylmethionine:tRNA ribosyltransferase-isomerase (360 aa).

Belongs to the QueA family. In terms of assembly, monomer.

The protein resides in the cytoplasm. It carries out the reaction 7-aminomethyl-7-carbaguanosine(34) in tRNA + S-adenosyl-L-methionine = epoxyqueuosine(34) in tRNA + adenine + L-methionine + 2 H(+). Its pathway is tRNA modification; tRNA-queuosine biosynthesis. Functionally, transfers and isomerizes the ribose moiety from AdoMet to the 7-aminomethyl group of 7-deazaguanine (preQ1-tRNA) to give epoxyqueuosine (oQ-tRNA). This is S-adenosylmethionine:tRNA ribosyltransferase-isomerase from Rhodopseudomonas palustris (strain BisB5).